We begin with the raw amino-acid sequence, 333 residues long: 4-hydroxyproline epimerase (333 aa).

The active-site Proton acceptor is Cys90. Residues 91–92 (GH) and Asp249 contribute to the substrate site. The active-site Proton donor is the Cys253. 254–255 (GT) lines the substrate pocket.

It belongs to the proline racemase family. Homodimer.

The catalysed reaction is trans-4-hydroxy-L-proline = cis-4-hydroxy-D-proline. Its function is as follows. Allows intracellular utilization of 4-hydroxyproline, one of the major constituents of host collagen, by converting 4-hydroxy-L-proline to 4-hydroxy-D-proline, which can be further metabolized by intracellular 4-hydroxy-D-proline oxidases. Strong B-cell mitogen. Plays an important role in the regulation of intra- and extracellular amino acid pools, allowing the bacterium to profit from host precursors and enzymatic pathways. In Brucella suis (strain ATCC 23445 / NCTC 10510), this protein is 4-hydroxyproline epimerase.